The sequence spans 60 residues: Cytotoxin 10 (60 aa).

4 disulfides stabilise this stretch: cysteine 3/cysteine 21, cysteine 14/cysteine 38, cysteine 42/cysteine 53, and cysteine 54/cysteine 59.

The protein belongs to the three-finger toxin family. Short-chain subfamily. Type IA cytotoxin sub-subfamily. In terms of assembly, monomer in solution; Homodimer and oligomer in the presence of negatively charged lipids forming a pore with a size ranging between 20 and 30 Angstroms. In terms of tissue distribution, expressed by the venom gland.

It localises to the secreted. Its subcellular location is the target cell membrane. Its function is as follows. Shows cytolytic activity on many different cells by forming pore in lipid membranes. In vivo, increases heart rate or kills the animal by cardiac arrest. In addition, it binds to heparin with high affinity, interacts with Kv channel-interacting protein 1 (KCNIP1) in a calcium-independent manner, and binds to integrin alpha-V/beta-3 (ITGAV/ITGB3) with moderate affinity. The protein is Cytotoxin 10 of Naja annulifera (Banded Egyptian cobra).